Reading from the N-terminus, the 323-residue chain is tRNA U34 carboxymethyltransferase (323 aa).

Carboxy-S-adenosyl-L-methionine-binding positions include Lys-91, Trp-105, Lys-110, Gly-130, 152–154 (DPS), 181–182 (IE), Met-196, Tyr-200, and Arg-315.

The protein belongs to the class I-like SAM-binding methyltransferase superfamily. CmoB family. As to quaternary structure, homotetramer.

It carries out the reaction carboxy-S-adenosyl-L-methionine + 5-hydroxyuridine(34) in tRNA = 5-carboxymethoxyuridine(34) in tRNA + S-adenosyl-L-homocysteine + H(+). Functionally, catalyzes carboxymethyl transfer from carboxy-S-adenosyl-L-methionine (Cx-SAM) to 5-hydroxyuridine (ho5U) to form 5-carboxymethoxyuridine (cmo5U) at position 34 in tRNAs. In Vibrio parahaemolyticus serotype O3:K6 (strain RIMD 2210633), this protein is tRNA U34 carboxymethyltransferase.